We begin with the raw amino-acid sequence, 263 residues long: Pyrrolysine synthase (263 aa).

L8, V57, I64, and A107 together coordinate L-pyrrolysine. 7 residues coordinate NAD(+): K155, V156, D175, C210, P228, I230, and E249.

The protein belongs to the PylD family.

It catalyses the reaction (3R)-3-methyl-D-ornithyl-N(6)-L-lysine + NAD(+) = L-pyrrolysine + NH4(+) + NADH + 2 H(+). Its pathway is amino-acid biosynthesis; L-pyrrolysine biosynthesis. Its function is as follows. Catalyzes the ultimate step of the pyrrolysine biosynthesis pathway by converting the isopeptide (3R)-3-methyl-D-ornithyl-N(6)-L-lysine to the 22nd proteinogenic amino acid. Is able to use surrogate substrates such as (3R)-D-ornithyl-N(6)-L-lysine in vitro. This chain is Pyrrolysine synthase, found in Methanosarcina barkeri (strain Fusaro / DSM 804).